The following is a 479-amino-acid chain: D-aminoacyl-tRNA deacylase (479 aa).

It belongs to the DtdA deacylase family. In terms of assembly, monomer. Requires Zn(2+) as cofactor.

It carries out the reaction a D-aminoacyl-tRNA + H2O = a tRNA + a D-alpha-amino acid + H(+). The enzyme catalyses glycyl-tRNA(Ala) + H2O = tRNA(Ala) + glycine + H(+). Its function is as follows. D-aminoacyl-tRNA deacylase with broad substrate specificity. By recycling D-aminoacyl-tRNA to D-amino acids and free tRNA molecules, this enzyme counteracts the toxicity associated with the formation of D-aminoacyl-tRNA entities in vivo. In Methanococcoides burtonii (strain DSM 6242 / NBRC 107633 / OCM 468 / ACE-M), this protein is D-aminoacyl-tRNA deacylase.